Reading from the N-terminus, the 908-residue chain is E3 ubiquitin-protein ligase ZNF598 (908 aa).

An RING-type zinc finger spans residues 27–67 (CVLCCGDLEATALGRCDHPVCYRCSTKMRVLCEQRYCAVCR). The C2H2-type zinc-finger motif lies at 185–208 (PLCKFCDERYLDNDELLKHLRRDH). 5 disordered regions span residues 292-338 (SRRS…KREE), 350-441 (SVAA…EEDF), 467-557 (PGPP…TVQG), 569-619 (SLLA…LEAP), and 719-744 (PSSH…TPGL). At Ser-295 the chain carries Phosphoserine. Tyr-304 is subject to Phosphotyrosine. Residues 313 to 329 (QGRAGRASGRGAQQNRR) are compositionally biased toward low complexity. The span at 358-385 (ETQRVEDREEGSRPKKEEAAARVPEEPR) shows a compositional bias: basic and acidic residues. Ser-433 carries the post-translational modification Phosphoserine. Residues 482 to 501 (PALVSSAPKPSSAPSSLISA) are compositionally biased toward low complexity. Basic residues predominate over residues 529-538 (KAGKGSRGGR).

This sequence belongs to the ZNF598/HEL2 family. In terms of assembly, interacts with the E2 ubiquitin-conjugating enzyme UBE2D3. Component of the 4EHP-GYF2 complex, at least composed of EIF4E2, GIGYF2 and ZNF598.

The protein resides in the cytoplasm. Its subcellular location is the cytosol. It carries out the reaction S-ubiquitinyl-[E2 ubiquitin-conjugating enzyme]-L-cysteine + [acceptor protein]-L-lysine = [E2 ubiquitin-conjugating enzyme]-L-cysteine + N(6)-ubiquitinyl-[acceptor protein]-L-lysine.. It functions in the pathway protein modification; protein ubiquitination. In terms of biological role, E3 ubiquitin-protein ligase that plays a key role in the ribosome quality control (RQC), a pathway that takes place when a ribosome has stalled during translation, leading to degradation of nascent peptide chains. ZNF598 is activated when ribosomes are stalled within an mRNA following translation of prematurely polyadenylated mRNAs. Acts as a ribosome collision sensor: specifically recognizes and binds collided di-ribosome, which arises when a trailing ribosome encounters a slower leading ribosome, leading to terminally arrest translation. Following binding to colliding ribosomes, mediates monoubiquitination of 40S ribosomal proteins RPS10/eS10 and RPS3/uS3, and 'Lys-63'-linked polyubiquitination of RPS20/uS10. Polyubiquitination of RPS20/uS10 promotes recruitment of the RQT (ribosome quality control trigger) complex, which drives the disassembly of stalled ribosomes, followed by degradation of nascent peptides. E3 ubiquitin-protein ligase activity is dependent on the E2 ubiquitin-conjugating enzyme UBE2D3. Also acts as an adapter that recruits the 4EHP-GYF2 complex to mRNAs. Independently of its role in RQC, may also act as a negative regulator of interferon-stimulated gene (ISG) expression. The protein is E3 ubiquitin-protein ligase ZNF598 of Mus musculus (Mouse).